The primary structure comprises 499 residues: L-asparagine permease (499 aa).

12 helical membrane-spanning segments follow: residues 34-54 (QVQM…GAGA), 58-78 (MAGP…FFIL), 109-129 (VAGW…ITAV), 146-166 (VFAL…VKWF), 171-191 (FWFA…GTVF), 219-239 (LLPA…IEMV), 264-284 (IGLF…WSAY), 298-318 (LGVP…ALSS), 353-373 (YAGI…NYLV), 378-398 (FEIV…FIIV), 422-442 (APFT…LMAF), and 448-468 (TYTI…WFGV).

Belongs to the amino acid-polyamine-organocation (APC) superfamily. Amino acid transporter (AAT) (TC 2.A.3.1) family.

The protein resides in the cell inner membrane. In Escherichia coli (strain K12), this protein is L-asparagine permease (ansP).